The following is a 989-amino-acid chain: Putative transcription elongation factor SPT5 homolog 2 (989 aa).

Residues 1 to 26 (MSQYSDDDYSHEDDSEMEDEDEEDEY) are compositionally biased toward acidic residues. The disordered stretch occupies residues 1–82 (MSQYSDDDYS…VEDDDDDVDV (82 aa)). Positions 31–42 (SRKGRSGKKRGR) are enriched in basic residues. Acidic residues predominate over residues 65-82 (WEVEVDDDVEDDDDDVDV). KOW domains lie at 260–287 (DLSRDSWVRMKLGIYKGDLAQVVDVDNV), 412–439 (HFMKGDAVIVIKGDLKNLKGWIEKVDEE), 464–491 (YFEPGNFVKVVSGIHEGGTGMIVKVDQH), 588–615 (VVAVKDVVRVIEGPSKGKQGPVVQIYKG), and 683–710 (DHLVGTYVKIRLGPFKGYSGRLVEVKDK). The tract at residues 790–852 (MSPPRDNWED…SPMTPSSTSY (63 aa)) is disordered. Over residues 842-852 (PSPMTPSSTSY) the composition is skewed to low complexity. A KOW 6 domain is found at 936–963 (CPKKNERVKILGGKYCGSTAKVIGEDGQ).

The protein belongs to the SPT5 family.

The protein localises to the nucleus. Functionally, may regulate transcription elongation by RNA polymerase II. May enhance transcriptional pausing at sites proximal to the promoter, which may in turn facilitate the assembly of an elongation competent RNA polymerase II complex. This chain is Putative transcription elongation factor SPT5 homolog 2, found in Arabidopsis thaliana (Mouse-ear cress).